The sequence spans 873 residues: Outer membrane usher protein FimC (873 aa).

A signal peptide spans 1–15 (MKQIPLILAMSLAFA). A disulfide bridge links Cys815 with Cys838.

The protein belongs to the fimbrial export usher family.

The protein localises to the cell outer membrane. Functionally, probable porin-like protein necessary for the assembly of a pilin-type protein. The protein is Outer membrane usher protein FimC (fimC) of Bordetella pertussis (strain Tohama I / ATCC BAA-589 / NCTC 13251).